Here is a 417-residue protein sequence, read N- to C-terminus: MPGTRGPRVAMLSVHTSPLDQPGTGDAGGMNVYVLELSRALARRGAEVEIFTRATSSAQPPVVDVQPGIRVLHVPAGPFEGLDKNDLPGQLCAFTAGVLRAEAHRSEGWYDVVHTHYWLSGQAGWLAAERWDVPLVHTMHTMARVKNAALAPGDVPEPQGRVIGEEQVVAASDALVASTREEAEDLVRLYGADLDRIHVVPPGVDLDTFTPPVPSDATARTALRERLGLPVDSPLILFAGRVQLLKGPDVLVQALEHLPEEVRLVVLGGASGRPTAVRELEALAHQCGVRDRVLVHPPVERRRLADWYRAADVVAVPSHNESFGLVAAEAQACGTPVVAAAVGGLRTVVLDDVNGVLVDGHDPLAWADVLGALLADDGRRARLAAGARAASRRFGWDEAAAAMLDVYAQATKRRPAR.

Residue His15 participates in 1D-myo-inositol 3-phosphate binding. UDP-N-acetyl-alpha-D-glucosamine-binding positions include Gln21 to Pro22 and Gly29. 1D-myo-inositol 3-phosphate-binding positions include Asp26 to Asn31, Lys84, Tyr117, Thr141, and Arg161. 3 residues coordinate UDP-N-acetyl-alpha-D-glucosamine: Arg241, Lys246, and Val299. The Mg(2+) site is built by Tyr308, Arg309, and Ala311. Glu321 and Glu329 together coordinate UDP-N-acetyl-alpha-D-glucosamine. Thr335 lines the Mg(2+) pocket.

Belongs to the glycosyltransferase group 1 family. MshA subfamily. As to quaternary structure, homodimer.

It carries out the reaction 1D-myo-inositol 3-phosphate + UDP-N-acetyl-alpha-D-glucosamine = 1D-myo-inositol 2-acetamido-2-deoxy-alpha-D-glucopyranoside 3-phosphate + UDP + H(+). Its function is as follows. Catalyzes the transfer of a N-acetyl-glucosamine moiety to 1D-myo-inositol 3-phosphate to produce 1D-myo-inositol 2-acetamido-2-deoxy-glucopyranoside 3-phosphate in the mycothiol biosynthesis pathway. In Xylanimonas cellulosilytica (strain DSM 15894 / JCM 12276 / CECT 5975 / KCTC 9989 / LMG 20990 / NBRC 107835 / XIL07), this protein is D-inositol 3-phosphate glycosyltransferase.